A 530-amino-acid polypeptide reads, in one-letter code: Proline--tRNA ligase, cytoplasmic (530 aa).

This sequence belongs to the class-II aminoacyl-tRNA synthetase family.

It localises to the cytoplasm. Its subcellular location is the cytosol. The enzyme catalyses tRNA(Pro) + L-proline + ATP = L-prolyl-tRNA(Pro) + AMP + diphosphate. Its function is as follows. Catalyzes the attachment of proline to tRNA(Pro) in a two-step reaction: proline is first activated by ATP to form Pro-AMP and then transferred to the acceptor end of tRNA(Pro). This is Proline--tRNA ligase, cytoplasmic from Arabidopsis thaliana (Mouse-ear cress).